Here is a 223-residue protein sequence, read N- to C-terminus: 7-cyano-7-deazaguanine synthase (223 aa).

Position 12-22 (12-22 (FSGGQDSTTCL)) interacts with ATP. Zn(2+) is bound by residues Cys-189, Cys-198, Cys-201, and Cys-204.

The protein belongs to the QueC family. Homodimer. It depends on Zn(2+) as a cofactor.

The enzyme catalyses 7-carboxy-7-deazaguanine + NH4(+) + ATP = 7-cyano-7-deazaguanine + ADP + phosphate + H2O + H(+). It functions in the pathway purine metabolism; 7-cyano-7-deazaguanine biosynthesis. Functionally, catalyzes the ATP-dependent conversion of 7-carboxy-7-deazaguanine (CDG) to 7-cyano-7-deazaguanine (preQ(0)). The polypeptide is 7-cyano-7-deazaguanine synthase (Halalkalibacterium halodurans (strain ATCC BAA-125 / DSM 18197 / FERM 7344 / JCM 9153 / C-125) (Bacillus halodurans)).